The following is a 143-amino-acid chain: Large ribosomal subunit protein uL16 (143 aa).

The disordered stretch occupies residues 1–26 (MSMALLPRRVKYRKSQRGSRKGNATR). Basic residues predominate over residues 8 to 20 (RRVKYRKSQRGSR).

Belongs to the universal ribosomal protein uL16 family. As to quaternary structure, part of the 50S ribosomal subunit.

Functionally, binds 23S rRNA and is also seen to make contacts with the A and possibly P site tRNAs. The sequence is that of Large ribosomal subunit protein uL16 from Methylacidiphilum infernorum (isolate V4) (Methylokorus infernorum (strain V4)).